We begin with the raw amino-acid sequence, 461 residues long: METLFNGTLALAGRDQETTGFAWWAGNARLINLSGKLLGAHVAHAGLIVFWAGAMNLFEVAHFVPEKPMYEQGLILLPHLATLGWGVGPGGEVIDTFPYFVSGVLHLISSAVLGFGGIYHALLGPETLEESFPFFGYVWKDRNKMTTILGIHLILLGIGAFLLVFKALYFGGVYDTWAPGGGDVRKITNLTLSPSVIFGYLLKSPFGGEGWIVSVDDLEDIIGGHVWLGSICIFGGIWHILTKPFAWARRALVWSGEAYLSYSLGALSVFGFIACCFVWFNNTAYPSEFYGPTGPEASQAQAFTFLVRDQRLGANVGSAQGPTGLGKYLMRSPTGEVIFGGETMRFWDLRAPWLEPLRGPNGLDLSRLKKDIQPWQERRSAEYMTHAPLGSLNSVGGVATEINAVNYVSPRSWLATSHFVLGFFLFVGHLWHAGRARAAAAGFEKGIDRDFEPVLSMTPLN.

Positions 1-2 (ME) are excised as a propeptide. Residue Thr-3 is modified to N-acetylthreonine. Thr-3 carries the post-translational modification Phosphothreonine. Helical transmembrane passes span 57–81 (LFEV…PHLA), 122–143 (LLGP…KDRN), 166–188 (KALY…RKIT), 243–263 (KPFA…LSYS), and 279–300 (WFNN…ASQA). Residue Glu-355 coordinates [CaMn4O5] cluster. A helical membrane pass occupies residues 435–459 (RARAAAAGFEKGIDRDFEPVLSMTP).

The protein belongs to the PsbB/PsbC family. PsbC subfamily. PSII is composed of 1 copy each of membrane proteins PsbA, PsbB, PsbC, PsbD, PsbE, PsbF, PsbH, PsbI, PsbJ, PsbK, PsbL, PsbM, PsbT, PsbX, PsbY, PsbZ, Psb30/Ycf12, at least 3 peripheral proteins of the oxygen-evolving complex and a large number of cofactors. It forms dimeric complexes. Binds multiple chlorophylls and provides some of the ligands for the Ca-4Mn-5O cluster of the oxygen-evolving complex. It may also provide a ligand for a Cl- that is required for oxygen evolution. PSII binds additional chlorophylls, carotenoids and specific lipids. is required as a cofactor.

It is found in the plastid. The protein localises to the chloroplast thylakoid membrane. One of the components of the core complex of photosystem II (PSII). It binds chlorophyll and helps catalyze the primary light-induced photochemical processes of PSII. PSII is a light-driven water:plastoquinone oxidoreductase, using light energy to abstract electrons from H(2)O, generating O(2) and a proton gradient subsequently used for ATP formation. The polypeptide is Photosystem II CP43 reaction center protein (Gossypium barbadense (Sea Island cotton)).